The chain runs to 334 residues: Probable tRNA pseudouridine synthase B (334 aa).

Residue Asp82 is the Nucleophile of the active site. The 76-residue stretch at 250–325 (LPKVWIRDSA…IAVDVDKVFM (76 aa)) folds into the PUA domain.

This sequence belongs to the pseudouridine synthase TruB family. Type 2 subfamily.

The enzyme catalyses uridine(55) in tRNA = pseudouridine(55) in tRNA. Functionally, could be responsible for synthesis of pseudouridine from uracil-55 in the psi GC loop of transfer RNAs. This chain is Probable tRNA pseudouridine synthase B, found in Thermococcus onnurineus (strain NA1).